The chain runs to 31 residues: Cliotide T10 (31 aa).

The segment at residues 1-31 (GIPCGESCVYIPCTVTALLGCSCKDKVCYKN) is a cross-link (cyclopeptide (Gly-Asn)). Disulfide bonds link Cys-4/Cys-21, Cys-8/Cys-23, and Cys-13/Cys-28.

In terms of processing, contains 3 disulfide bonds. Post-translationally, this is a cyclic peptide. In terms of tissue distribution, expressed in seed, root and nodule but not in flower, stem, shoot, leaf and pod (at protein level).

In terms of biological role, probably participates in a plant defense mechanism. The sequence is that of Cliotide T10 from Clitoria ternatea (Butterfly pea).